Here is a 2506-residue protein sequence, read N- to C-terminus: Zinc finger protein 462 (2506 aa).

3 C2H2-type zinc fingers span residues 4–27 (LQCDGCDFRAPSYEDLKAHIQDVH), 108–131 (FQCKFCVRYFRSKNLLIEHTRKVH), and 162–185 (FSCQFCTYKSPRRARIIKHQKMYH). Lys-20 participates in a covalent cross-link: Glycyl lysine isopeptide (Lys-Gly) (interchain with G-Cter in SUMO1); alternate. A Glycyl lysine isopeptide (Lys-Gly) (interchain with G-Cter in SUMO2); alternate cross-link involves residue Lys-20. The interval 215–241 (PCKELPAEVVERSILESMVKPLTKSRG) is interaction with PBX1. Glycyl lysine isopeptide (Lys-Gly) (interchain with G-Cter in SUMO2) cross-links involve residues Lys-234 and Lys-271. The tract at residues 280 to 299 (QEGTNLPDVPNKSAPSPTSN) is disordered. 2 O-linked (GlcNAc6P) serine glycosylation sites follow: Ser-292 and Ser-309. Residues Lys-337, Lys-347, and Lys-349 each participate in a glycyl lysine isopeptide (Lys-Gly) (interchain with G-Cter in SUMO2) cross-link. The tract at residues 337 to 356 (KFSPMSYPQMKPKSPHNSGL) is disordered. Residues Ser-350 and Ser-354 each carry the phosphoserine modification. A Glycyl lysine isopeptide (Lys-Gly) (interchain with G-Cter in SUMO2) cross-link involves residue Lys-428. 2 C2H2-type zinc fingers span residues 439–462 (FQCPFCPFLTMHRRSISRHIENIH) and 470–492 (YKCDECPFTCKSSLKLGAHKQCH). A Glycyl lysine isopeptide (Lys-Gly) (interchain with G-Cter in SUMO2) cross-link involves residue Lys-484. The segment at 535-596 (DPLQQQQPPQ…QPQPPTQAAP (62 aa)) is disordered. The segment covering 542–593 (PPQPPPPPPPPPPSQPQPLQQPQPPQLQPPHQVPPQPQTQPPPTQQPQPPTQ) has biased composition (pro residues). The C2H2-type 6 zinc finger occupies 600–623 (YKCTMCNYSTTTLKGLRVHQQHKH). Residues Lys-631, Lys-657, and Lys-668 each participate in a glycyl lysine isopeptide (Lys-Gly) (interchain with G-Cter in SUMO2) cross-link. A disordered region spans residues 636 to 661 (PSSLPLENETDSHPSSSNTVKKSQTS). A compositionally biased stretch (polar residues) spans 648-661 (HPSSSNTVKKSQTS). Ser-688 bears the Phosphoserine mark. Residues Lys-706 and Asp-849 each participate in a glycyl lysine isopeptide (Lys-Gly) (interchain with G-Cter in SUMO2) cross-link. C2H2-type zinc fingers lie at residues 843-866 (YYCKHCDFNNKSARSVSTHYQRMH), 886-908 (YRCLECYIDYTNFEDLQQHYGEH), and 925-948 (YRCRFCSYTSPNVRSLMPHYQRMH). Residue Lys-986 forms a Glycyl lysine isopeptide (Lys-Gly) (interchain with G-Cter in SUMO2) linkage. The C2H2-type 10 zinc finger occupies 1030 to 1053 (YDCDVCSFASPNMHSVLVHYQKKH). Ser-1090 is modified (phosphoserine). Lys-1135 participates in a covalent cross-link: Glycyl lysine isopeptide (Lys-Gly) (interchain with G-Cter in SUMO2). A disordered region spans residues 1157–1186 (MRGVEGPQGSPRPPAPIQQLNRSSSERDGP). Ser-1166 carries the post-translational modification Phosphoserine. Glycyl lysine isopeptide (Lys-Gly) (interchain with G-Cter in SUMO2) cross-links involve residues Lys-1206, Lys-1214, Lys-1220, and Lys-1243. 2 consecutive C2H2-type zinc fingers follow at residues 1265–1288 (LKCRQCSYTSPYFYALRKHIKKDH) and 1470–1493 (YQCTVCQSEYNNLHGLLTHYGKKH). Lys-1499 is covalently cross-linked (Glycyl lysine isopeptide (Lys-Gly) (interchain with G-Cter in SUMO2)). The segment at 1515-1538 (YKCRHCPYINTRIHGVLTHYQKRH) adopts a C2H2-type 13 zinc-finger fold. Residues Lys-1571 and Lys-1591 each participate in a glycyl lysine isopeptide (Lys-Gly) (interchain with G-Cter in SUMO2) cross-link. 3 C2H2-type zinc fingers span residues 1577–1600 (YRCKLCPYTHGTLEKLKIHYEKYH), 1660–1683 (FRCQLCKYFCSTRKGIARHYRIKH), and 1697–1720 (FKCALCAYTNPIRKGLAAHYQKRH). Residues Lys-1698 and Lys-1780 each participate in a glycyl lysine isopeptide (Lys-Gly) (interchain with G-Cter in SUMO2) cross-link. The C2H2-type 17 zinc finger occupies 1892-1914 (YQCKHCDSKLQSTAELTSHLNIH). A Glycyl lysine isopeptide (Lys-Gly) (interchain with G-Cter in SUMO2) cross-link involves residue Lys-1946. The segment at 1968 to 1992 (YKCKFCVEVHPTLRAICNHLRKHVQ) adopts a C2H2-type 18; degenerate zinc-finger fold. Lys-2004 carries the N6-methyllysine modification. C2H2-type zinc fingers lie at residues 2025–2048 (YSCQYCSFVSAFRHNLDRHMQTHH), 2054–2077 (FRCKLCSFKSSYNSRLKTHILKAH), and 2083–2106 (YKCSWCSFSTMTISQLKEHSLKVH). Lys-2104 is covalently cross-linked (Glycyl lysine isopeptide (Lys-Gly) (interchain with G-Cter in SUMO2)). Positions 2122–2152 (SSHSHHSSQKATPAEEVEDSNDSSYSEPPDV) are disordered. Over residues 2143–2152 (DSSYSEPPDV) the composition is skewed to polar residues. A phosphoserine mark is found at Ser-2172 and Ser-2177. C2H2-type zinc fingers lie at residues 2191–2214 (LHCEFCEFSSGYIQSIRRHYRDKH), 2220–2243 (FKCKDCSFYTGFKSAFTMHVEAGH), and 2254–2276 (LRCPLCLYHTKYKRNMIDHIVLH). Lys-2293 is covalently cross-linked (Glycyl lysine isopeptide (Lys-Gly) (interchain with G-Cter in SUMO2)). 2 C2H2-type zinc fingers span residues 2300-2322 (FRCDKCTFTCSSDESLQQHIEKH) and 2328-2351 (YKCQLCYYETKHTEELDSHLRDEH). The interval 2371-2396 (MKEKMESSSSDDEDKEEEMNSKAEDR) is disordered. A C2H2-type 27 zinc finger spans residues 2414 to 2436 (FPCEFCGRAFSQGSEWERHVLRH). Residues Lys-2444 and Lys-2504 each participate in a glycyl lysine isopeptide (Lys-Gly) (interchain with G-Cter in SUMO2) cross-link.

As to quaternary structure, interacts with PBX1; this interaction prevents PBX1-HOXA9 heterodimer from forming and binding to DNA. In terms of processing, O-GlcNAcylated with O-GlcNAc-6-phosphate.

Its subcellular location is the nucleus. In terms of biological role, zinc finger nuclear factor involved in transcription by regulating chromatin structure and organization. Involved in the pluripotency and differentiation of embryonic stem cells by regulating SOX2, POU5F1/OCT4, and NANOG. By binding PBX1, prevents the heterodimerization of PBX1 and HOXA9 and their binding to DNA. Regulates neuronal development and neural cell differentiation. In Homo sapiens (Human), this protein is Zinc finger protein 462.